The following is a 146-amino-acid chain: Large ribosomal subunit protein uL15 (146 aa).

Positions 1 to 65 (MSDIQLNSLK…GQMPLQRRLP (65 aa)) are disordered. Gly residues predominate over residues 24–34 (RGIGSGLGKTA).

Belongs to the universal ribosomal protein uL15 family. In terms of assembly, part of the 50S ribosomal subunit.

In terms of biological role, binds to the 23S rRNA. The chain is Large ribosomal subunit protein uL15 from Bordetella avium (strain 197N).